Reading from the N-terminus, the 1137-residue chain is Nonsense-mediated mRNA decay factor SMG7 (1137 aa).

An N-acetylserine modification is found at serine 2. TPR repeat units follow at residues 152–185 (QHCL…VPSN) and 187–219 (QPYN…KFPF). Serine 520 is modified (phosphoserine). Over residues 620–631 (ELRKTPVSEARK) the composition is skewed to basic and acidic residues. 6 disordered regions span residues 620 to 646 (ELRK…NSQF), 696 to 794 (LQPT…YQQA), 890 to 911 (IDRR…VPRM), 988 to 1055 (PSLP…AMGG), 1069 to 1089 (SSWH…PSME), and 1104 to 1137 (SSSM…NPPH). Threonine 624 bears the Phosphothreonine mark. Polar residues-rich tracts occupy residues 633–646 (PVTQ…NSQF) and 696–722 (LQPT…SQQR). Low complexity predominate over residues 723–770 (PSGPGPMNQGPQQSQPPSQQPLTSLPAQPTAQSTSQLQVQALTQQQQS). Serine 781 and serine 897 each carry phosphoserine. Residues 988–998 (PSLPASSDHST) show a composition bias toward polar residues. Residues 999–1025 (PASQSPHSSNPSSLPSSPPTHNHNSVP) are compositionally biased toward low complexity. Basic and acidic residues predominate over residues 1036–1050 (DNRDRRTADRWKTDK). Positions 1069–1081 (SSWHQASTPSGTW) are enriched in polar residues. The span at 1117 to 1131 (QLLMQQKQKQQRGQG) shows a compositional bias: low complexity.

As to quaternary structure, part of a complex that contains SMG5, SMG7, PPP2CA, a short isoform of UPF3A (isoform UPF3AS, but not isoform UPF3AL) and phosphorylated UPF1. Interacts with DHX34; the interaction is RNA-independent.

The protein resides in the cytoplasm. It is found in the nucleus. Functionally, plays a role in nonsense-mediated mRNA decay. Recruits UPF1 to cytoplasmic mRNA decay bodies. Together with SMG5 is thought to provide a link to the mRNA degradation machinery involving exonucleolytic pathways, and to serve as an adapter for UPF1 to protein phosphatase 2A (PP2A), thereby triggering UPF1 dephosphorylation. The protein is Nonsense-mediated mRNA decay factor SMG7 of Homo sapiens (Human).